A 322-amino-acid polypeptide reads, in one-letter code: 4-hydroxythreonine-4-phosphate dehydrogenase (322 aa).

Substrate-binding residues include His126 and Thr127. His160, His205, and His260 together coordinate a divalent metal cation. Positions 268, 277, and 286 each coordinate substrate.

This sequence belongs to the PdxA family. In terms of assembly, homodimer. It depends on Zn(2+) as a cofactor. Mg(2+) serves as cofactor. Co(2+) is required as a cofactor.

The protein resides in the cytoplasm. It carries out the reaction 4-(phosphooxy)-L-threonine + NAD(+) = 3-amino-2-oxopropyl phosphate + CO2 + NADH. The protein operates within cofactor biosynthesis; pyridoxine 5'-phosphate biosynthesis; pyridoxine 5'-phosphate from D-erythrose 4-phosphate: step 4/5. In terms of biological role, catalyzes the NAD(P)-dependent oxidation of 4-(phosphooxy)-L-threonine (HTP) into 2-amino-3-oxo-4-(phosphooxy)butyric acid which spontaneously decarboxylates to form 3-amino-2-oxopropyl phosphate (AHAP). This Paracoccus denitrificans (strain Pd 1222) protein is 4-hydroxythreonine-4-phosphate dehydrogenase.